We begin with the raw amino-acid sequence, 314 residues long: L-lactate dehydrogenase (314 aa).

NAD(+)-binding positions include Val17, Asp38, Lys43, Tyr69, and 83 to 84; that span reads GA. Residues Gln86 and Arg92 each coordinate substrate. NAD(+) contacts are provided by residues Ser105, 122–124, and Ser147; that span reads ASN. 124–127 is a substrate binding site; it reads NPVD. Residue 152–155 participates in substrate binding; the sequence is DSAR. Arg157 and His172 together coordinate beta-D-fructose 1,6-bisphosphate. The Proton acceptor role is filled by His179. Tyr223 carries the post-translational modification Phosphotyrosine. Thr232 is a binding site for substrate.

Belongs to the LDH/MDH superfamily. LDH family. In terms of assembly, homotetramer.

It localises to the cytoplasm. The catalysed reaction is (S)-lactate + NAD(+) = pyruvate + NADH + H(+). Its pathway is fermentation; pyruvate fermentation to lactate; (S)-lactate from pyruvate: step 1/1. Allosterically activated by fructose 1,6-bisphosphate (FBP). Catalyzes the conversion of lactate to pyruvate. This chain is L-lactate dehydrogenase, found in Corynebacterium glutamicum (strain ATCC 13032 / DSM 20300 / JCM 1318 / BCRC 11384 / CCUG 27702 / LMG 3730 / NBRC 12168 / NCIMB 10025 / NRRL B-2784 / 534).